An 83-amino-acid chain; its full sequence is Small ribosomal subunit protein bS20 (83 aa).

The protein belongs to the bacterial ribosomal protein bS20 family.

In terms of biological role, binds directly to 16S ribosomal RNA. The polypeptide is Small ribosomal subunit protein bS20 (Leuconostoc mesenteroides subsp. mesenteroides (strain ATCC 8293 / DSM 20343 / BCRC 11652 / CCM 1803 / JCM 6124 / NCDO 523 / NBRC 100496 / NCIMB 8023 / NCTC 12954 / NRRL B-1118 / 37Y)).